A 288-amino-acid chain; its full sequence is UTP--glucose-1-phosphate uridylyltransferase (288 aa).

The protein belongs to the UDPGP type 2 family.

It carries out the reaction alpha-D-glucose 1-phosphate + UTP + H(+) = UDP-alpha-D-glucose + diphosphate. Its pathway is glycolipid metabolism; diglucosyl-diacylglycerol biosynthesis. Its function is as follows. Catalyzes the formation of UDP-glucose from glucose-1-phosphate and UTP. This is an intermediate step in the biosynthesis of diglucosyl-diacylglycerol (Glc2-DAG), i.e. the predominant glycolipid found in the S.aureus membrane, which is also used as a membrane anchor for lipoteichoic acid (LTA). The sequence is that of UTP--glucose-1-phosphate uridylyltransferase (gtaB) from Staphylococcus aureus (strain MSSA476).